The sequence spans 232 residues: Flagellar L-ring protein (232 aa).

Residues 1–15 form the signal peptide; it reads MKKVLFYVLPFAFFG. Cysteine 16 carries the N-palmitoyl cysteine lipid modification. Cysteine 16 is lipidated: S-diacylglycerol cysteine.

Belongs to the FlgH family. The basal body constitutes a major portion of the flagellar organelle and consists of four rings (L,P,S, and M) mounted on a central rod.

Its subcellular location is the cell outer membrane. It is found in the bacterial flagellum basal body. Its function is as follows. Assembles around the rod to form the L-ring and probably protects the motor/basal body from shearing forces during rotation. The sequence is that of Flagellar L-ring protein from Campylobacter jejuni subsp. jejuni serotype O:6 (strain 81116 / NCTC 11828).